We begin with the raw amino-acid sequence, 347 residues long: MHSSSSLIKLGFLLLLLNVSLSHAQLSPSFYDKTCPQVFDIATNTIKTALRSDPRIAASILRLHFHDCFVNGCDASILLDNTTSFRTEKDAFGNARSARGFDVIDTMKAAVEKACPKTVSCADLLAIAAQKSVVLAGGPSWKVPSGRRDSLRGFMDLANDNLPGPSSTLQVLKDKFRNVGLDRPSDLVALSGGHTFGKNQCQFIMDRLYNFSNSGKPDPTLDKSYLSTLRKQCPRNGNLSVLVDFDLRTPTIFDNKYYVNLKENKGLIQSDQELFSSPDASDTIPLVRAYADGQGKFFDAFVEAMIRMGNLSPSTGKQGEIRLNCRVVNSKPKIMDVVDTNDFASSI.

The first 24 residues, 1-24 (MHSSSSLIKLGFLLLLLNVSLSHA), serve as a signal peptide directing secretion. Intrachain disulfides connect cysteine 35/cysteine 115, cysteine 68/cysteine 73, cysteine 121/cysteine 325, and cysteine 201/cysteine 233. The Proton acceptor role is filled by histidine 66. Residues aspartate 67, valine 70, glycine 72, aspartate 74, and serine 76 each coordinate Ca(2+). The N-linked (GlcNAc...) asparagine glycan is linked to asparagine 81. Proline 163 is a binding site for substrate. Histidine 194 is a binding site for heme b. Ca(2+) is bound at residue threonine 195. N-linked (GlcNAc...) asparagine glycosylation is found at asparagine 210 and asparagine 238. Positions 246, 249, and 254 each coordinate Ca(2+).

This sequence belongs to the peroxidase family. Classical plant (class III) peroxidase subfamily. The cofactor is Ca(2+). Requires heme b as cofactor.

The protein localises to the secreted. Its subcellular location is the vacuole. It catalyses the reaction 2 a phenolic donor + H2O2 = 2 a phenolic radical donor + 2 H2O. Functionally, removal of H(2)O(2), oxidation of toxic reductants, biosynthesis and degradation of lignin, suberization, auxin catabolism, response to environmental stresses such as wounding, pathogen attack and oxidative stress. These functions might be dependent on each isozyme/isoform in each plant tissue. The chain is Peroxidase C2 (PRXC2) from Armoracia rusticana (Horseradish).